A 400-amino-acid polypeptide reads, in one-letter code: Homoserine O-acetyltransferase (400 aa).

Over residues methionine 1–alanine 11 the composition is skewed to polar residues. The interval methionine 1–proline 24 is disordered. Over residues histidine 13–histidine 23 the composition is skewed to basic and acidic residues. An AB hydrolase-1 domain is found at asparagine 64–leucine 373. Catalysis depends on serine 169, which acts as the Nucleophile. Position 239 (arginine 239) interacts with substrate. Active-site residues include aspartate 335 and histidine 368. Aspartate 369 contributes to the substrate binding site.

This sequence belongs to the AB hydrolase superfamily. MetX family. As to quaternary structure, homodimer.

It is found in the cytoplasm. It carries out the reaction L-homoserine + acetyl-CoA = O-acetyl-L-homoserine + CoA. Its pathway is amino-acid biosynthesis; L-methionine biosynthesis via de novo pathway; O-acetyl-L-homoserine from L-homoserine: step 1/1. In terms of biological role, transfers an acetyl group from acetyl-CoA to L-homoserine, forming acetyl-L-homoserine. The sequence is that of Homoserine O-acetyltransferase from Rhodopseudomonas palustris (strain BisB18).